The sequence spans 448 residues: Putative vacuolar cation/proton exchanger 6 (448 aa).

Over 31-81 (MGLVNEVELKSLLEQETDSPQTNAASLMEQGSLRERRAKAPRNSVVQSFKI) the chain is Cytoplasmic. The chain crosses the membrane as a helical span at residues 82 to 102 (VILSNKLNLLLPFGPLAILVH). The Extracellular portion of the chain corresponds to 103-109 (YLTDNKG). The helical transmembrane segment at 110 to 130 (WFFLLSLVGITPLAERLGYAT) threads the bilayer. Over 131-141 (EQLSCYTGATV) the chain is Cytoplasmic. A helical membrane pass occupies residues 142–162 (GGLLNATFGNVIELIISIIAL). The segment at 150–185 (GNVIELIISIIALKNGMIRVVQLTLLGSILSNILLV) is cation selection. Over 163–178 (KNGMIRVVQLTLLGSI) the chain is Extracellular. A helical membrane pass occupies residues 179–199 (LSNILLVLGCAFFCGGLVFPG). The Cytoplasmic portion of the chain corresponds to 200 to 209 (KDQVFDKRNA). A helical transmembrane segment spans residues 210–230 (VVSSGMLLMAVMGLLFPTFLH). Residues 231–243 (YTHSEVHAGSSEL) are Extracellular-facing. Residues 244-264 (ALSRFISCIMLVAYAAYLFFQ) form a helical membrane-spanning segment. Topologically, residues 265 to 295 (LKSQPSFYTEKTNQNEETSNDDEDPEISKWE) are cytoplasmic. A helical transmembrane segment spans residues 296–316 (AIIWLSIFTAWVSLLSGYLVD). At 317–334 (AIEGTSVSWKIPISFISV) the chain is on the extracellular side. A helical transmembrane segment spans residues 335 to 355 (ILLPIVGNAAEHAGAIMFAMK). The segment at 341 to 376 (GNAAEHAGAIMFAMKDKLDLSLGVAIGSSIQISMFA) is cation selection. Over 356–363 (DKLDLSLG) the chain is Cytoplasmic. Residues 364–384 (VAIGSSIQISMFAVPFCVVIG) form a helical membrane-spanning segment. Residues 385 to 393 (WMMGAQMDL) lie on the Extracellular side of the membrane. Residues 394-414 (NLQLFETATLLITVIVVAFFL) traverse the membrane as a helical segment. Residues 415–425 (QLEGTSNYFKR) are Cytoplasmic-facing. Residues 426-446 (LMLILCYLIVAASFFVHEDPH) form a helical membrane-spanning segment. At 447 to 448 (QG) the chain is on the extracellular side.

The protein belongs to the Ca(2+):cation antiporter (CaCA) (TC 2.A.19) family. Cation/proton exchanger (CAX) subfamily.

The protein resides in the vacuole membrane. Its function is as follows. Vacuolar cation/proton exchanger (CAX). Translocates Ca(2+) and other metal ions into vacuoles using the proton gradient formed by H(+)-ATPase and H(+)-pyrophosphatase. In Arabidopsis thaliana (Mouse-ear cress), this protein is Putative vacuolar cation/proton exchanger 6 (CAX6).